Here is a 193-residue protein sequence, read N- to C-terminus: Large ribosomal subunit protein uL11 (193 aa).

This sequence belongs to the universal ribosomal protein uL11 family. In terms of assembly, part of the ribosomal stalk of the 50S ribosomal subunit. Interacts with L10 and the large rRNA to form the base of the stalk. L10 forms an elongated spine to which L12 dimers bind in a sequential fashion forming a multimeric L10(L12)X complex. One or more lysine residues are methylated.

Functionally, forms part of the ribosomal stalk which helps the ribosome interact with GTP-bound translation factors. This chain is Large ribosomal subunit protein uL11, found in Mycoplasmopsis synoviae (strain 53) (Mycoplasma synoviae).